Reading from the N-terminus, the 274-residue chain is 2,3,4,5-tetrahydropyridine-2,6-dicarboxylate N-succinyltransferase (274 aa).

Substrate is bound by residues Arg106 and Asp143.

This sequence belongs to the transferase hexapeptide repeat family. In terms of assembly, homotrimer.

Its subcellular location is the cytoplasm. The enzyme catalyses (S)-2,3,4,5-tetrahydrodipicolinate + succinyl-CoA + H2O = (S)-2-succinylamino-6-oxoheptanedioate + CoA. The protein operates within amino-acid biosynthesis; L-lysine biosynthesis via DAP pathway; LL-2,6-diaminopimelate from (S)-tetrahydrodipicolinate (succinylase route): step 1/3. This Rickettsia felis (strain ATCC VR-1525 / URRWXCal2) (Rickettsia azadi) protein is 2,3,4,5-tetrahydropyridine-2,6-dicarboxylate N-succinyltransferase.